The chain runs to 350 residues: Fe(2+) transport protein 2 (350 aa).

The first 21 residues, 1–21 (MATTKLVYILLILFTFTVSPA), serve as a signal peptide directing secretion. The Extracellular segment spans residues 22–47 (ISTAPEHCDSGFDNPCINKAKALPLK). Residues 48–68 (IVAIVAILTTSLIGVTSPLFS) traverse the membrane as a helical segment. Over 69 to 80 (RYISFLRPDGNG) the chain is Cytoplasmic. A helical transmembrane segment spans residues 81-101 (FMIVKCFSSGIILGTGFMHVL). Topologically, residues 102 to 120 (PDSFEMLSSKCLSDNPWHK) are extracellular. The helical transmembrane segment at 121–141 (FPFAGFVAMMSGLVTLAIDSI) threads the bilayer. Residues 142-195 (TTSLYTGKNSVGPVPDEEYGIDQEKAIHMVGHNHSHGHGVVLATKDDGQLLRYQ) lie on the Cytoplasmic side of the membrane. A helical membrane pass occupies residues 196-216 (VIAMVLEVGILFHSVVIGLSL). Over 217–227 (GATNDSCTIKG) the chain is Extracellular. A helical transmembrane segment spans residues 228 to 248 (LIIALCFHHLFEGIGLGGCIL). Topologically, residues 249-257 (QADFTNVKK) are cytoplasmic. The helical transmembrane segment at 258-278 (FLMAFFFTGTTPCGIFLGIAL) threads the bilayer. Residues 279–289 (SSIYRDNSPTA) are Extracellular-facing. Residues 290-310 (LITIGLLNACSAGMLIYMALV) form a helical membrane-spanning segment. The Cytoplasmic portion of the chain corresponds to 311-329 (DLLATEFMGSMLQGSIKLQ). Residues 330-350 (IKCFTAALLGCAVMSVVAVWA) traverse the membrane as a helical segment.

Belongs to the ZIP transporter (TC 2.A.5) family. As to expression, expressed in the external cell layers of the root subapical zone.

The protein localises to the cell membrane. Its function is as follows. High-affinity iron transporter that mediates under iron-deficiency the iron uptake from the rhizosphere across the plasma membrane in the root epidermal layer. Could also be capable of transporting zinc ions. The polypeptide is Fe(2+) transport protein 2 (IRT2) (Arabidopsis thaliana (Mouse-ear cress)).